The primary structure comprises 407 residues: uncharacterized protein (407 aa).

Disordered stretches follow at residues 1–64, 110–276, and 314–341; these read MSRK…EPFD, GFGP…YPQF, and QSRP…HNNP. The span at 7–32 shows a compositional bias: polar residues; that stretch reads KQSNPKRNYKNDNYFQENSYTMTNGF. Basic and acidic residues predominate over residues 33–44; it reads TKDKDGKPVEFK. The span at 122-137 shows a compositional bias: acidic residues; it reads DSDSEYSDECLTDECS. 2 stretches are compositionally biased toward polar residues: residues 138-147 and 184-201; these read DNYNKQSTDS and NFDN…NSQP. Residues 209-231 show a composition bias toward low complexity; it reads SKSSSKSSKSNKSNKSSKSNKSS. Positions 232 to 246 are enriched in basic residues; that stretch reads KSSKSKSNKHSKHKN. The span at 247-258 shows a compositional bias: basic and acidic residues; it reads KSDSSSDSDEKT. 2 stretches are compositionally biased toward basic residues: residues 259–270 and 316–341; these read HKHKDRRHRRGR and RPRK…HNNP.

This is an uncharacterized protein from Acanthamoeba polyphaga mimivirus (APMV).